A 332-amino-acid chain; its full sequence is Glyceraldehyde-3-phosphate dehydrogenase 1 (332 aa).

The NAD(+) site is built by R11, I12, D33, and T120. Residues 149 to 151 (SCT), T180, 209 to 210 (TG), and R232 contribute to the D-glyceraldehyde 3-phosphate site. The Nucleophile role is filled by C150. The NAD(+) site is built by N314 and Y318.

Belongs to the glyceraldehyde-3-phosphate dehydrogenase family. As to quaternary structure, homotetramer.

It is found in the cytoplasm. The catalysed reaction is D-glyceraldehyde 3-phosphate + phosphate + NAD(+) = (2R)-3-phospho-glyceroyl phosphate + NADH + H(+). The enzyme catalyses NADH + H2O = (6R)-NADHX. It carries out the reaction NADH + H2O = (6S)-NADHX. It catalyses the reaction NADPH + H2O = (6R)-NADPHX. The catalysed reaction is NADPH + H2O = (6S)-NADPHX. Its pathway is carbohydrate degradation; glycolysis; pyruvate from D-glyceraldehyde 3-phosphate: step 1/5. Functionally, glyceraldehyde-3-phosphate dehydrogenase (GAPDH) involved in glycolysis and gluconeogenesis. Catalyzes the reaction of glyceraldehyde-3-phosphate to 1,3 bis-phosphoglycerate. The contribution of the TDH1, TDH2, and TDH3 to the total glyceraldehyde-3-phosphate dehydrogenase activity is 10-15, 25-30, and 50-60%, respectively. May be involved in a process other than glycolysis because it is synthesized by cells in stationary phase. As a side activity, catalyzes the hydration of the nicotinamide ring of NADH or NADPH at the C6 position to give the corresponding hydrates, NADHX and NADPHX, which exist as R and S epimers, that cannot act as electron donors or acceptors and inhibit several dehydrogenases, making them toxic. This chain is Glyceraldehyde-3-phosphate dehydrogenase 1, found in Saccharomyces cerevisiae (strain ATCC 204508 / S288c) (Baker's yeast).